We begin with the raw amino-acid sequence, 296 residues long: NADH-cytochrome b5 reductase 1 (296 aa).

Residues 11–31 (LSAVLVKFAPFAVAVIAILAA) form a helical membrane-spanning segment. Residues 47-152 (SEFQNFVLKE…RGPKGAMVYT (106 aa)) enclose the FAD-binding FR-type domain. FAD is bound by residues 132–147 (TTLK…GPKG) and 158–195 (HIGM…KIDL).

This sequence belongs to the flavoprotein pyridine nucleotide cytochrome reductase family. In terms of assembly, monomer. Component of the 2-(3-amino-3-carboxypropyl)histidine synthase complex composed of dph1, dph2, dph3 and a NADH-dependent reductase, predominantly cbr1. It depends on FAD as a cofactor.

The protein resides in the mitochondrion outer membrane. The catalysed reaction is 2 Fe(III)-[cytochrome b5] + NADH = 2 Fe(II)-[cytochrome b5] + NAD(+) + H(+). The enzyme catalyses 2 Fe(3+)-[Dph3] + NADH = 2 Fe(2+)-[Dph3] + NAD(+) + H(+). It participates in protein modification; peptidyl-diphthamide biosynthesis. Its function is as follows. NADH-dependent reductase for dph3 and cytochrome b5. Required for the first step of diphthamide biosynthesis, a post-translational modification of histidine which occurs in elongation factor 2. Dph1 and dph2 transfer a 3-amino-3-carboxypropyl (ACP) group from S-adenosyl-L-methionine (SAM) to a histidine residue, the reaction is assisted by a reduction system comprising dph3 and a NADH-dependent reductase, predominantly cbr1. By reducing dph3, also involved in the formation of the tRNA wobble base modification mcm5s 2U (5-methoxycarbonylmethyl-2-thiouridine), mediated by the elongator complex. The cytochrome b5/NADH cytochrome b5 reductase electron transfer system supports the catalytic activity of several sterol biosynthetic enzymes. This is NADH-cytochrome b5 reductase 1 (cbr1) from Aspergillus terreus (strain NIH 2624 / FGSC A1156).